A 314-amino-acid chain; its full sequence is Acetyl-coenzyme A carboxylase carboxyl transferase subunit alpha (314 aa).

The CoA carboxyltransferase C-terminal domain maps to 38-292 (RLERKSAALL…ANAIDEELDA (255 aa)).

This sequence belongs to the AccA family. Acetyl-CoA carboxylase is a heterohexamer composed of biotin carboxyl carrier protein (AccB), biotin carboxylase (AccC) and two subunits each of ACCase subunit alpha (AccA) and ACCase subunit beta (AccD).

It localises to the cytoplasm. It carries out the reaction N(6)-carboxybiotinyl-L-lysyl-[protein] + acetyl-CoA = N(6)-biotinyl-L-lysyl-[protein] + malonyl-CoA. It functions in the pathway lipid metabolism; malonyl-CoA biosynthesis; malonyl-CoA from acetyl-CoA: step 1/1. Component of the acetyl coenzyme A carboxylase (ACC) complex. First, biotin carboxylase catalyzes the carboxylation of biotin on its carrier protein (BCCP) and then the CO(2) group is transferred by the carboxyltransferase to acetyl-CoA to form malonyl-CoA. The chain is Acetyl-coenzyme A carboxylase carboxyl transferase subunit alpha from Erythrobacter litoralis (strain HTCC2594).